A 111-amino-acid chain; its full sequence is Cell division protein FtsB (111 aa).

Over 1–3 (MGK) the chain is Cytoplasmic. The chain crosses the membrane as a helical span at residues 4–21 (LTLLLLILLGWLQYSLWL). Residues 22-111 (GKNGIHDYVR…TNTPSNNIQR (90 aa)) lie on the Periplasmic side of the membrane. The stretch at 33–63 (KDDVVVQQGNNAKLKDRNEQLFAEIDDLNGG) forms a coiled coil. The interval 90-111 (ESNHRNANTAPSTNTPSNNIQR) is disordered. Positions 95 to 111 (NANTAPSTNTPSNNIQR) are enriched in low complexity.

Belongs to the FtsB family. In terms of assembly, part of a complex composed of FtsB, FtsL and FtsQ.

The protein localises to the cell inner membrane. Its function is as follows. Essential cell division protein. May link together the upstream cell division proteins, which are predominantly cytoplasmic, with the downstream cell division proteins, which are predominantly periplasmic. The sequence is that of Cell division protein FtsB from Pectobacterium carotovorum subsp. carotovorum (strain PC1).